The chain runs to 87 residues: Large ribosomal subunit protein bL31B (87 aa).

This sequence belongs to the bacterial ribosomal protein bL31 family. Type B subfamily. In terms of assembly, part of the 50S ribosomal subunit.

The chain is Large ribosomal subunit protein bL31B from Latilactobacillus sakei subsp. sakei (strain 23K) (Lactobacillus sakei subsp. sakei).